Consider the following 141-residue polypeptide: HTH-type transcriptional repressor NsrR (141 aa).

Positions 2-129 (QLTSFTDYAL…DDCSIAELLD (128 aa)) constitute an HTH rrf2-type domain. Positions 28–51 (ITDVTELFGVSRNHMVKVINRLGQ) form a DNA-binding region, H-T-H motif. Cysteine 91, cysteine 96, and cysteine 102 together coordinate [2Fe-2S] cluster.

[2Fe-2S] cluster is required as a cofactor.

In terms of biological role, nitric oxide-sensitive repressor of genes involved in protecting the cell against nitrosative stress. May require iron for activity. This is HTH-type transcriptional repressor NsrR from Vibrio vulnificus (strain CMCP6).